A 231-amino-acid polypeptide reads, in one-letter code: MKNPMLEAASLLLEKLLLISNFKLFSVSVPGGGTGKNRPYEISSFVRGDVLEVSRTHFIHYGIYLGENRVAHLMPDILLALTNDKERTQKVVSNKRLLLGVICKVASIRVDTVEDFAYGADILVNHLDGTLKKKSLLNEEVARRAEQQLGLTPYSLLWNNCEHFVTYCRYGSRISPQAEKFYDTVKIIIRDQRSSLASAVLGLASIVYTGLASYMTLPAICIPFCLWMMSG.

The Cytoplasmic segment spans residues 1–194 (MKNPMLEAAS…VKIIIRDQRS (194 aa)). The 128-residue stretch at 50-177 (VLEVSRTHFI…CRYGSRISPQ (128 aa)) folds into the LRAT domain. Catalysis depends on residues H60 and H72. Residue C161 is the Acyl-thioester intermediate of the active site. Residues 195-215 (SLASAVLGLASIVYTGLASYM) form a helical membrane-spanning segment. The Lumenal segment spans residues 216 to 231 (TLPAICIPFCLWMMSG).

This sequence belongs to the H-rev107 family. In terms of tissue distribution, hepatic stellate cells and endothelial cells (at protein level).

It localises to the endoplasmic reticulum membrane. It is found in the rough endoplasmic reticulum. The protein resides in the endosome. The protein localises to the multivesicular body. Its subcellular location is the cytoplasm. It localises to the perinuclear region. It carries out the reaction all-trans-retinol--[retinol-binding protein] + a 1,2-diacyl-sn-glycero-3-phosphocholine = apo--[retinol-binding protein] + an all-trans-retinyl ester + a 2-acyl-sn-glycero-3-phosphocholine. It catalyses the reaction 1,2-diheptanoyl-sn-glycero-3-phosphocholine + all-trans-retinol--[retinol-binding protein] = all-trans-retinyl heptanoate + 2-heptanoyl-sn-glycero-3-phosphocholine + apo--[retinol-binding protein]. The catalysed reaction is 1,2-dioctanoyl-sn-glycero-3-phosphocholine + all-trans-retinol--[retinol-binding protein] = 2-octanoyl-sn-glycero-3-phosphocholine + all-trans-retinyl octanoate + apo--[retinol-binding protein]. The enzyme catalyses all-trans-retinol--[retinol-binding protein] + 1,2-dihexadecanoyl-sn-glycero-3-phosphocholine = apo--[retinol-binding protein] + all-trans-retinyl hexadecanoate + 2-hexadecanoyl-sn-glycero-3-phosphocholine. It carries out the reaction 1,2-didodecanoyl-sn-glycero-3-phosphocholine + all-trans-retinol--[retinol-binding protein] = 2-dodecanoyl-sn-glycero-3-phosphocholine + all-trans-retinyl dodecanoate + apo--[retinol-binding protein]. It catalyses the reaction 1,2-dihexadecanoyl-sn-glycero-3-phosphocholine + all-trans-retinol = all-trans-retinyl hexadecanoate + 2-hexadecanoyl-sn-glycero-3-phosphocholine. Its pathway is cofactor metabolism; retinol metabolism. Its activity is regulated as follows. Inhibited by all-trans-retinyl alpha-bromoacetate and N-boc-L-biocytinyl-11-aminoundecane chloro-methyl ketone (BACMK). In terms of biological role, transfers the acyl group from the sn-1 position of phosphatidylcholine to all-trans retinol, producing all-trans retinyl esters. Retinyl esters are storage forms of vitamin A. LRAT plays a critical role in vision. It provides the all-trans retinyl ester substrates for the isomerohydrolase which processes the esters into 11-cis-retinol in the retinal pigment epithelium; due to a membrane-associated alcohol dehydrogenase, 11 cis-retinol is oxidized and converted into 11-cis-retinaldehyde which is the chromophore for rhodopsin and the cone photopigments. Required for the survival of cone photoreceptors and correct rod photoreceptor cell morphology. In Mus musculus (Mouse), this protein is Lecithin retinol acyltransferase (Lrat).